A 348-amino-acid polypeptide reads, in one-letter code: NADH-quinone oxidoreductase subunit H (348 aa).

8 helical membrane-spanning segments follow: residues 7–27 (IWLL…VVLL), 82–102 (GVFL…WAVI), 115–135 (VGLL…IMGG), 161–181 (IGFV…TTIV), 199–219 (FLDW…ISAL), 251–271 (LFFL…TILF), 287–307 (VPGI…FAMV), and 322–342 (LGWK…ATFL).

Belongs to the complex I subunit 1 family. NDH-1 is composed of 14 different subunits. Subunits NuoA, H, J, K, L, M, N constitute the membrane sector of the complex.

It localises to the cell inner membrane. It carries out the reaction a quinone + NADH + 5 H(+)(in) = a quinol + NAD(+) + 4 H(+)(out). In terms of biological role, NDH-1 shuttles electrons from NADH, via FMN and iron-sulfur (Fe-S) centers, to quinones in the respiratory chain. The immediate electron acceptor for the enzyme in this species is believed to be ubiquinone. Couples the redox reaction to proton translocation (for every two electrons transferred, four hydrogen ions are translocated across the cytoplasmic membrane), and thus conserves the redox energy in a proton gradient. This subunit may bind ubiquinone. This chain is NADH-quinone oxidoreductase subunit H, found in Bartonella quintana (strain Toulouse) (Rochalimaea quintana).